The chain runs to 205 residues: Methylthioribulose-1-phosphate dehydratase (205 aa).

Zn(2+) is bound by residues histidine 96 and histidine 98.

Belongs to the aldolase class II family. MtnB subfamily. The cofactor is Zn(2+).

The catalysed reaction is 5-(methylsulfanyl)-D-ribulose 1-phosphate = 5-methylsulfanyl-2,3-dioxopentyl phosphate + H2O. The protein operates within amino-acid biosynthesis; L-methionine biosynthesis via salvage pathway; L-methionine from S-methyl-5-thio-alpha-D-ribose 1-phosphate: step 2/6. In terms of biological role, catalyzes the dehydration of methylthioribulose-1-phosphate (MTRu-1-P) into 2,3-diketo-5-methylthiopentyl-1-phosphate (DK-MTP-1-P). This is Methylthioribulose-1-phosphate dehydratase from Pseudomonas aeruginosa (strain LESB58).